Consider the following 284-residue polypeptide: MLSKQIPLGIYEKALPAGECWLERLQLAKKLGFDFVEMSVDETDDRLSRLDWSREQRLALVNAIVETGVRVPSMCLSAHRRFPLGSEDDAVRAQGLEIMRKAIQFAQDVGIRVIQLAGYDVYYQEANNETRRRFRDGLKESVEMASRAQVTLAMEIMDYPLMNSISKALGYAHYLNNPWFQLYPDIGNLSAWDNDVQMELQAGIGHIVAVHVKDTKPGVFKNVPFGEGVVDFERCFETLKQSGYCGPYLIEMWSETAEDPAAEVAKARDWVKARMAKAGMVEAA.

The protein belongs to the L-ribulose-5-phosphate 3-epimerase family.

The catalysed reaction is L-ribulose 5-phosphate = L-xylulose 5-phosphate. It functions in the pathway cofactor degradation; L-ascorbate degradation; D-xylulose 5-phosphate from L-ascorbate: step 3/4. Functionally, catalyzes the isomerization of L-xylulose-5-phosphate to L-ribulose-5-phosphate. Is involved in the anaerobic L-ascorbate utilization. In Escherichia coli (strain SMS-3-5 / SECEC), this protein is L-ribulose-5-phosphate 3-epimerase UlaE.